Consider the following 896-residue polypeptide: Translation initiation factor IF-2 (896 aa).

Basic and acidic residues predominate over residues 117-174; sequence AEAEAKAKAEAEAKAKVDAEAKVKAKAEAEAKAKAKVQTEKPAAETAEDKAAKAEEAK. Residues 117–303 are disordered; that stretch reads AEAEAKAKAE…TRSVAPESMD (187 aa). Low complexity predominate over residues 175–195; it reads LLAAQDAVAKAKANEEASAAA. Over residues 196-227 the composition is skewed to basic and acidic residues; the sequence is DEARRLAEENEKRWAEEEKARKEAEKSVDHHV. Over residues 254 to 268 the composition is skewed to low complexity; that stretch reads PSANAGNNANANAGA. Residues 396–563 enclose the tr-type G domain; that stretch reads PRAPVVTIMG…GILLEAEVLE (168 aa). The G1 stretch occupies residues 405 to 412; sequence GHVDHGKT. 405-412 lines the GTP pocket; it reads GHVDHGKT. A G2 region spans residues 430–434; the sequence is GITQH. The interval 451 to 454 is G3; it reads DTPG. GTP-binding positions include 451-455 and 505-508; these read DTPGH and NKID. Positions 505 to 508 are G4; that stretch reads NKID. A G5 region spans residues 541 to 543; it reads SAK.

Belongs to the TRAFAC class translation factor GTPase superfamily. Classic translation factor GTPase family. IF-2 subfamily.

Its subcellular location is the cytoplasm. In terms of biological role, one of the essential components for the initiation of protein synthesis. Protects formylmethionyl-tRNA from spontaneous hydrolysis and promotes its binding to the 30S ribosomal subunits. Also involved in the hydrolysis of GTP during the formation of the 70S ribosomal complex. In Shewanella pealeana (strain ATCC 700345 / ANG-SQ1), this protein is Translation initiation factor IF-2.